A 58-amino-acid chain; its full sequence is Succinate dehydrogenase subunit 8A, mitochondrial (58 aa).

Component of complex II composed of eight subunits in plants: four classical SDH subunits SDH1, SDH2, SDH3 and SDH4 (a flavoprotein (FP), an iron-sulfur protein (IP), and a cytochrome b composed of a large and a small subunit.), as well as four subunits unknown in mitochondria from bacteria and heterotrophic eukaryotes.

The protein resides in the mitochondrion inner membrane. It participates in carbohydrate metabolism; tricarboxylic acid cycle. In Oryza sativa subsp. japonica (Rice), this protein is Succinate dehydrogenase subunit 8A, mitochondrial.